We begin with the raw amino-acid sequence, 248 residues long: Ribosomal RNA small subunit methyltransferase J (248 aa).

S-adenosyl-L-methionine-binding positions include 98-99 (RD), 114-115 (ER), 150-151 (SS), and Asp-168.

Belongs to the methyltransferase superfamily. RsmJ family.

The protein localises to the cytoplasm. It carries out the reaction guanosine(1516) in 16S rRNA + S-adenosyl-L-methionine = N(2)-methylguanosine(1516) in 16S rRNA + S-adenosyl-L-homocysteine + H(+). In terms of biological role, specifically methylates the guanosine in position 1516 of 16S rRNA. The polypeptide is Ribosomal RNA small subunit methyltransferase J (Shewanella baltica (strain OS195)).